The sequence spans 231 residues: Probable GTP-binding protein EngB (231 aa).

The 181-residue stretch at D51–P231 folds into the EngB-type G domain. GTP contacts are provided by residues G59 to S66, G86 to E90, D109 to G112, T176 to D179, and T210 to S212. Positions 66 and 88 each coordinate Mg(2+).

This sequence belongs to the TRAFAC class TrmE-Era-EngA-EngB-Septin-like GTPase superfamily. EngB GTPase family. Mg(2+) serves as cofactor.

Functionally, necessary for normal cell division and for the maintenance of normal septation. The polypeptide is Probable GTP-binding protein EngB (Rhodospirillum rubrum (strain ATCC 11170 / ATH 1.1.1 / DSM 467 / LMG 4362 / NCIMB 8255 / S1)).